A 662-amino-acid polypeptide reads, in one-letter code: UvrABC system protein B (662 aa).

Residues 31 to 188 (DNIEGGEKAQ…NDLVDIQFER (158 aa)) form the Helicase ATP-binding domain. 44–51 (GATGTGKT) provides a ligand contact to ATP. A Beta-hairpin motif is present at residues 97-120 (YYDYYQPEAYVPSSDTYIEKDSSV). The Helicase C-terminal domain occupies 435–601 (QIDDLLGEIN…TIKKEIRDLI (167 aa)). The region spanning 626 to 661 (KELVKKLEKQMQEAVEVLDFELAAQIRDMMLEVKAL) is the UVR domain.

Belongs to the UvrB family. In terms of assembly, forms a heterotetramer with UvrA during the search for lesions. Interacts with UvrC in an incision complex.

It is found in the cytoplasm. In terms of biological role, the UvrABC repair system catalyzes the recognition and processing of DNA lesions. A damage recognition complex composed of 2 UvrA and 2 UvrB subunits scans DNA for abnormalities. Upon binding of the UvrA(2)B(2) complex to a putative damaged site, the DNA wraps around one UvrB monomer. DNA wrap is dependent on ATP binding by UvrB and probably causes local melting of the DNA helix, facilitating insertion of UvrB beta-hairpin between the DNA strands. Then UvrB probes one DNA strand for the presence of a lesion. If a lesion is found the UvrA subunits dissociate and the UvrB-DNA preincision complex is formed. This complex is subsequently bound by UvrC and the second UvrB is released. If no lesion is found, the DNA wraps around the other UvrB subunit that will check the other stand for damage. The polypeptide is UvrABC system protein B (Streptococcus pneumoniae (strain P1031)).